Reading from the N-terminus, the 161-residue chain is 2-C-methyl-D-erythritol 2,4-cyclodiphosphate synthase (161 aa).

Residues Asp8 and His10 each coordinate a divalent metal cation. 4-CDP-2-C-methyl-D-erythritol 2-phosphate is bound by residues 8 to 10 (DLH) and 34 to 35 (HS). His42 is an a divalent metal cation binding site. 4-CDP-2-C-methyl-D-erythritol 2-phosphate-binding positions include 56 to 58 (DIG) and Arg142.

Belongs to the IspF family. In terms of assembly, homotrimer. Requires a divalent metal cation as cofactor.

The enzyme catalyses 4-CDP-2-C-methyl-D-erythritol 2-phosphate = 2-C-methyl-D-erythritol 2,4-cyclic diphosphate + CMP. It participates in isoprenoid biosynthesis; isopentenyl diphosphate biosynthesis via DXP pathway; isopentenyl diphosphate from 1-deoxy-D-xylulose 5-phosphate: step 4/6. Functionally, involved in the biosynthesis of isopentenyl diphosphate (IPP) and dimethylallyl diphosphate (DMAPP), two major building blocks of isoprenoid compounds. Catalyzes the conversion of 4-diphosphocytidyl-2-C-methyl-D-erythritol 2-phosphate (CDP-ME2P) to 2-C-methyl-D-erythritol 2,4-cyclodiphosphate (ME-CPP) with a corresponding release of cytidine 5-monophosphate (CMP). The protein is 2-C-methyl-D-erythritol 2,4-cyclodiphosphate synthase of Treponema denticola (strain ATCC 35405 / DSM 14222 / CIP 103919 / JCM 8153 / KCTC 15104).